Consider the following 487-residue polypeptide: Protein Optix (487 aa).

Positions 154 to 214 (WDGEQKTHCF…KNRRQRDRAA (61 aa)) form a DNA-binding region, homeobox. Disordered regions lie at residues 182-330 (NPTK…GAGP) and 443-463 (ASVG…GYHH). The segment covering 255–277 (GTHSPVPSSLQLQHSPGSTSNGA) has biased composition (polar residues). The span at 278 to 293 (NDREESLSVDDDKPRD) shows a compositional bias: basic and acidic residues. Residues 294 to 312 (LSGSLPLPLSLPLPLASPT) show a composition bias toward low complexity. Over residues 321 to 330 (GYGGGAGAGP) the composition is skewed to gly residues.

Belongs to the SIX/Sine oculis homeobox family. In terms of tissue distribution, expressed during early development of the head. First expressed in a band around the anterior end of stage 5 blastoderm embryo, at 93% to 85% egg length. By gastrula stage, site of expression shifts to the dorsal-anterior region. At stage 12, expression is found in the clypeolabrum, the stomodaeum, and in ectoderm dorsal to the future supraesophageal ganglion.

Its subcellular location is the nucleus. May be involved in head or eye development; development of the clypeolabrum and several head sensory organs. The chain is Protein Optix (Optix) from Drosophila melanogaster (Fruit fly).